Reading from the N-terminus, the 413-residue chain is Phosphoglycerate kinase (413 aa).

Residues 19–21 (DLN), Arg-34, 57–60 (HQSK), Arg-114, and Arg-154 each bind substrate. Residues Glu-332 and 358–361 (GGHS) contribute to the ATP site.

Belongs to the phosphoglycerate kinase family. Monomer.

It is found in the cytoplasm. It carries out the reaction (2R)-3-phosphoglycerate + ATP = (2R)-3-phospho-glyceroyl phosphate + ADP. It functions in the pathway carbohydrate degradation; glycolysis; pyruvate from D-glyceraldehyde 3-phosphate: step 2/5. The polypeptide is Phosphoglycerate kinase (Thermococcus sibiricus (strain DSM 12597 / MM 739)).